A 285-amino-acid polypeptide reads, in one-letter code: Shikimate dehydrogenase (NADP(+)) (285 aa).

Residues 20 to 22 (SRS) and Thr67 each bind shikimate. The active-site Proton acceptor is the Lys71. Residues Asn93 and Asp108 each contribute to the shikimate site. Residues 132-136 (GAGGA) and Met224 contribute to the NADP(+) site. Tyr226 serves as a coordination point for shikimate. Gly248 contacts NADP(+).

This sequence belongs to the shikimate dehydrogenase family. Homodimer.

It carries out the reaction shikimate + NADP(+) = 3-dehydroshikimate + NADPH + H(+). It participates in metabolic intermediate biosynthesis; chorismate biosynthesis; chorismate from D-erythrose 4-phosphate and phosphoenolpyruvate: step 4/7. Functionally, involved in the biosynthesis of the chorismate, which leads to the biosynthesis of aromatic amino acids. Catalyzes the reversible NADPH linked reduction of 3-dehydroshikimate (DHSA) to yield shikimate (SA). The sequence is that of Shikimate dehydrogenase (NADP(+)) from Bordetella avium (strain 197N).